The following is a 227-amino-acid chain: UPF0758 protein Dred_2549 (227 aa).

One can recognise an MPN domain in the interval 105-227 (IIRCPEDVCG…FTSLKSKGLI (123 aa)). Zn(2+) contacts are provided by His-176, His-178, and Asp-189. The JAMM motif signature appears at 176 to 189 (HNHPSGDPTPSRED).

Belongs to the UPF0758 family.

In Desulforamulus reducens (strain ATCC BAA-1160 / DSM 100696 / MI-1) (Desulfotomaculum reducens), this protein is UPF0758 protein Dred_2549.